Consider the following 20-residue polypeptide: Succinate--CoA ligase [ADP-forming] subunit beta, mitochondrial (20 aa).

Positions Ser8–Pro20 constitute an ATP-grasp domain.

This sequence belongs to the succinate/malate CoA ligase beta subunit family. ATP-specific subunit beta subfamily. Heterodimer of an alpha and a beta subunit. The beta subunit determines specificity for ATP. Interacts with ALAS2.

The protein localises to the mitochondrion. The enzyme catalyses succinate + ATP + CoA = succinyl-CoA + ADP + phosphate. It functions in the pathway carbohydrate metabolism; tricarboxylic acid cycle; succinate from succinyl-CoA (ligase route): step 1/1. In terms of biological role, ATP-specific succinyl-CoA synthetase functions in the citric acid cycle (TCA), coupling the hydrolysis of succinyl-CoA to the synthesis of ATP and thus represents the only step of substrate-level phosphorylation in the TCA. The beta subunit provides nucleotide specificity of the enzyme and binds the substrate succinate, while the binding sites for coenzyme A and phosphate are found in the alpha subunit. In Canis lupus familiaris (Dog), this protein is Succinate--CoA ligase [ADP-forming] subunit beta, mitochondrial.